The primary structure comprises 2273 residues: Acetyl-CoA carboxylase, mitochondrial (2273 aa).

Residues 1–104 (KGKTITHGQS…RGNIHKHTRL (104 aa)) constitute a mitochondrion transit peptide. The 502-residue stretch at 134–635 (VISKILIANN…STGWLDDLIL (502 aa)) folds into the Biotin carboxylation domain. An ATP-grasp domain is found at 292 to 484 (KTNFVSVPDD…LPATQLQIAM (193 aa)). 332-337 (GGGGKG) lines the ATP pocket. Arginine 459 is a catalytic residue. The Biotinyl-binding domain occupies 763 to 837 (LEAELNPTQV…EAGDVIAKLT (75 aa)). Lysine 804 carries the post-translational modification N6-biotinyllysine. The region spanning 1532–1867 (PYSVKDWLQP…KRDMSPPLLE (336 aa)) is the CoA carboxyltransferase N-terminal domain. A carboxyltransferase region spans residues 1532–2187 (PYSVKDWLQP…EGQVIKRLQK (656 aa)). CoA contacts are provided by arginine 1776, lysine 2080, and arginine 2082. Residues 1871 to 2187 (RWDRDVDFKP…EGQVIKRLQK (317 aa)) form the CoA carboxyltransferase C-terminal domain.

The cofactor is biotin.

It is found in the mitochondrion. It catalyses the reaction hydrogencarbonate + acetyl-CoA + ATP = malonyl-CoA + ADP + phosphate + H(+). It carries out the reaction N(6)-biotinyl-L-lysyl-[protein] + hydrogencarbonate + ATP = N(6)-carboxybiotinyl-L-lysyl-[protein] + ADP + phosphate + H(+). The protein operates within lipid metabolism; malonyl-CoA biosynthesis; malonyl-CoA from acetyl-CoA: step 1/1. Functionally, catalyzes the rate-limiting reaction in the mitochondrial fatty acid synthesis (FAS) type II pathway. Responsible for the production of the mitochondrial malonyl-CoA, used for the biosynthesis of the cofactor lipoic acid. This protein carries three functions: biotin carboxyl carrier protein, biotin carboxylase, and carboxyltransferase. The sequence is that of Acetyl-CoA carboxylase, mitochondrial (HFA1) from Saccharomyces cerevisiae (strain Lalvin EC1118 / Prise de mousse) (Baker's yeast).